Here is a 178-residue protein sequence, read N- to C-terminus: MSIENLKAALPEYAKDLKLNLGSISRTTVLDEEQLWGTLLASAAATRNAQVLAEIGAEAADNLSAQAYQAALGAVSIMGMNNVFYRGRGFLEGQYDDLRAGLRMNIIANPGVDKANFELWSFAVSSVNGCSHCVVAHEHTLREAGVGREAVFEALKAAAIVCGVAQALTAAQTLAAVG.

Cys-130 functions as the Proton donor in the catalytic mechanism. Cys-130 and Cys-133 are oxidised to a cystine. The Cysteine sulfenic acid (-SOH) intermediate role is filled by Cys-133.

Belongs to the AhpD family. As to quaternary structure, homotrimer.

The catalysed reaction is N(6)-[(R)-dihydrolipoyl]-L-lysyl-[lipoyl-carrier protein] + a hydroperoxide = N(6)-[(R)-lipoyl]-L-lysyl-[lipoyl-carrier protein] + an alcohol + H2O. Functionally, antioxidant protein with alkyl hydroperoxidase activity. Required for the reduction of the AhpC active site cysteine residues and for the regeneration of the AhpC enzyme activity. The polypeptide is Alkyl hydroperoxide reductase AhpD (Mycobacterium ulcerans (strain Agy99)).